Consider the following 1137-residue polypeptide: Bone sialoprotein-binding protein (1137 aa).

The first 52 residues, 1-52 (MINRDNKKAITKKGMISNRLNKFSIRKYTVGTASILVGTTLIFGLGNQEAKA), serve as a signal peptide directing secretion. Residues 53–601 (AENTSTENAK…GDGTVKPEEK (549 aa)) are ligand binding A region. Disordered stretches follow at residues 54-249 (ENTS…TAPT) and 675-697 (LPTKENGTTDGEKDSNGSSVTVK). Positions 61–75 (AKQDEASASDNKEVV) are enriched in basic and acidic residues. Residues 77–89 (ETENNSTQKNDLT) show a composition bias toward polar residues. The span at 92-106 (IKKETNTDSHQEAKE) shows a compositional bias: basic and acidic residues. Low complexity predominate over residues 109–126 (TTSSTQQQQNNATTSTET). Positions 130 to 145 (NIEKENVKPSTDKTAT) are enriched in basic and acidic residues. A compositionally biased stretch (polar residues) spans 158 to 207 (PNNTNNDVTTKPSTSEIQTTPTTPQESTNIENSQPQPTPSKVDNQVTDAT). Over residues 216 to 241 (SKEELKNNPEKLKELVRNDSNTDRST) the composition is skewed to basic and acidic residues. CNA-B domains follow at residues 602–714 (LYKI…YKEP), 715–824 (KYNL…YKTP), and 825–935 (KYSL…EEDT). Positions 896 to 1112 (TQTGTNTTED…TGSENNGSNN (217 aa)) are disordered. 2 stretches are compositionally biased toward acidic residues: residues 903–913 (TEDDKDADGGE) and 930–1076 (YFEE…DSDS). An LPXTG sorting signal motif is present at residues 1100–1104 (LPETG). Residue Thr-1103 is modified to Pentaglycyl murein peptidoglycan amidated threonine. A propeptide spans 1104 to 1137 (GSENNGSNNATLFGGLFAALGSLLLFGRRKKQNK) (removed by sortase).

It belongs to the serine-aspartate repeat-containing protein (SDr) family.

Its subcellular location is the secreted. It is found in the cell wall. Its function is as follows. Specifically interacts with bone sialoprotein (BSP), a glycoprotein of bone and dentin extracellular matrix. Could contribute to staphylococcal osteomyelitis and arthritis. The polypeptide is Bone sialoprotein-binding protein (bbp) (Staphylococcus aureus (strain MRSA252)).